The following is a 324-amino-acid chain: 2,3,4,5-tetrahydropyridine-2,6-dicarboxylate N-succinyltransferase (324 aa).

Mg(2+) contacts are provided by D173 and E190. Catalysis depends on E206, which acts as the Acyl-anhydride intermediate. Succinyl-CoA is bound by residues R208, G223, S226, A249, 264-265 (EA), G272, K284, and 297-300 (RRNS).

This sequence belongs to the type 2 tetrahydrodipicolinate N-succinyltransferase family. Homotrimer.

It localises to the cytoplasm. The enzyme catalyses (S)-2,3,4,5-tetrahydrodipicolinate + succinyl-CoA + H2O = (S)-2-succinylamino-6-oxoheptanedioate + CoA. The protein operates within amino-acid biosynthesis; L-lysine biosynthesis via DAP pathway; LL-2,6-diaminopimelate from (S)-tetrahydrodipicolinate (succinylase route): step 1/3. Its function is as follows. Catalyzes the conversion of the cyclic tetrahydrodipicolinate (THDP) into the acyclic N-succinyl-L-2-amino-6-oxopimelate using succinyl-CoA. The sequence is that of 2,3,4,5-tetrahydropyridine-2,6-dicarboxylate N-succinyltransferase from Geodermatophilus obscurus (strain ATCC 25078 / DSM 43160 / JCM 3152 / CCUG 61914 / KCC A-0152 / KCTC 9177 / NBRC 13315 / NRRL B-3577 / G-20).